Here is a 592-residue protein sequence, read N- to C-terminus: Sodium- and chloride-dependent transporter XTRP3A (592 aa).

The Cytoplasmic portion of the chain corresponds to 1 to 7 (MEKARPQ). Residues 8–28 (WGHPLQFVFACISYAVGLGNV) form a helical membrane-spanning segment. The Extracellular portion of the chain corresponds to 29–42 (WRFPYLCQMYGGGS). A helical transmembrane segment spans residues 43-63 (FLVPYIIMLIVEGMPLLYLEL). The Cytoplasmic segment spans residues 64 to 79 (AVGQRMRQGSIGAWRT). The helical transmembrane segment at 80-100 (ISPYLSGVGVASVVVSFFLSM) threads the bilayer. Topologically, residues 101 to 165 (YYNVINAWGF…ISPSIQENGG (65 aa)) are extracellular. The N-linked (GlcNAc...) asparagine glycan is linked to Asn131. A helical membrane pass occupies residues 166–186 (VQWEPALCLTLAWLMVYLCIL). The Cytoplasmic segment spans residues 187–194 (RGTESTGK). The helical transmembrane segment at 195 to 215 (VVYFTASMPYCVLIIYLVRGL) threads the bilayer. At 216–241 (TLHGATNGLMYMFTPKMEQLANPKAW) the chain is on the extracellular side. Residues 242–262 (INAATQIFFSLGLGFGSLIAF) traverse the membrane as a helical segment. Residues 263-276 (ASYNEPSNNCQKHA) are Cytoplasmic-facing. The chain crosses the membrane as a helical span at residues 277 to 297 (IIVSIINSSTSIFASIVTFSI). The Extracellular portion of the chain corresponds to 298–389 (YGFKATFNYE…EAIKNMEVSQ (92 aa)). A helical membrane pass occupies residues 390–410 (LWSVLYFFMLLMLGIGSMLGN). The Cytoplasmic portion of the chain corresponds to 411 to 431 (TAAILTPLTDSKVISSYLPKE). The chain crosses the membrane as a helical span at residues 432–452 (AISGLVCLINCAVGMVFTMEA). At 453–465 (GNYWFDIFNDYAA) the chain is on the extracellular side. A helical transmembrane segment spans residues 466–486 (TLSLLLIVLVETIAVCYVYGL). Topologically, residues 487–504 (KRFESDLRAMTGRTLSWY) are cytoplasmic. The helical transmembrane segment at 505–525 (WKVMWAFVSPLLIVGLFIFYL) threads the bilayer. Residues 526–554 (SDYILTGTLQYQAWDATQGQLVTKDYPPH) lie on the Extracellular side of the membrane. A helical transmembrane segment spans residues 555–575 (ALAVIGLLVASSTMCIPLVAL). Residues 576 to 592 (GTFIRNRLKRGGSAPVA) lie on the Cytoplasmic side of the membrane.

The protein belongs to the sodium:neurotransmitter symporter (SNF) (TC 2.A.22) family. SLC6A20 subfamily. As to expression, expressed in brain, kidney, small intestine, thymus, spleen and lung. In the brain, expressed in cerebellum, cortex and brain stem. Not detected in liver, muscle or heart. In brain, widespread in various regions, including the meninges, choroid plexus, cortex, hippocampus and thalamus.

It is found in the apical cell membrane. The enzyme catalyses L-proline(out) + chloride(out) + 2 Na(+)(out) = L-proline(in) + chloride(in) + 2 Na(+)(in). The catalysed reaction is 4-hydroxy-L-proline(out) + chloride(out) + 2 Na(+)(out) = 4-hydroxy-L-proline(in) + chloride(in) + 2 Na(+)(in). It catalyses the reaction 2-methyl-2-(methylamino)propanoate(out) + chloride(out) + 2 Na(+)(out) = 2-methyl-2-(methylamino)propanoate(in) + chloride(in) + 2 Na(+)(in). It carries out the reaction L-pipecolate(out) + chloride(out) + 2 Na(+)(out) = L-pipecolate(in) + chloride(in) + 2 Na(+)(in). The enzyme catalyses glycine betaine(out) + chloride(out) + 2 Na(+)(out) = glycine betaine(in) + chloride(in) + 2 Na(+)(in). The catalysed reaction is glycine(out) + chloride(out) + 2 Na(+)(out) = glycine(in) + chloride(in) + 2 Na(+)(in). Its function is as follows. Mediates the Na(+)- and Cl(-)-dependent uptake of imino acids such as L-proline, N-methyl-L-proline and pipecolate as well as N-methylated amino acids. Also transports glycine, regulates proline and glycine homeostasis in the brain playing a role in the modulation of NMDAR currents. This Mus musculus (Mouse) protein is Sodium- and chloride-dependent transporter XTRP3A.